Here is a 222-residue protein sequence, read N- to C-terminus: Pleckstrin homology domain-containing family B member 2 (222 aa).

Positions 2-109 (AFVKSGWLLR…WKFTLQDSRT (108 aa)) constitute a PH domain. K20 contacts a 1,2-diacyl-sn-glycero-3-phospho-L-serine.

The protein localises to the recycling endosome membrane. Involved in retrograde transport of recycling endosomes. The polypeptide is Pleckstrin homology domain-containing family B member 2 (PLEKHB2) (Pongo abelii (Sumatran orangutan)).